The primary structure comprises 389 residues: Apoptosis inhibitor U19 (389 aa).

Belongs to the beta-herpesvirinae UL38 protein family. As to quaternary structure, interacts with host MDM2; this interaction leads to the stabilization of host TP53.

It localises to the host cytoplasm. The protein localises to the host nucleus. In terms of biological role, plays a role in the inhibition of host apoptosis to facilitate efficient viral replication. Promotes stabilization and inactivation of host TP53 through interaction with host MDM2. This Homo sapiens (Human) protein is Apoptosis inhibitor U19 (U19).